The following is a 430-amino-acid chain: Histidinol dehydrogenase (430 aa).

NAD(+)-binding residues include Tyr130, Gln191, and Asn214. Residues Ser237, Gln259, and His262 each coordinate substrate. Zn(2+)-binding residues include Gln259 and His262. Catalysis depends on proton acceptor residues Glu327 and His328. Residues His328, Asp361, Glu415, and His420 each contribute to the substrate site. Asp361 contributes to the Zn(2+) binding site. Zn(2+) is bound at residue His420.

Belongs to the histidinol dehydrogenase family. Requires Zn(2+) as cofactor.

It catalyses the reaction L-histidinol + 2 NAD(+) + H2O = L-histidine + 2 NADH + 3 H(+). Its pathway is amino-acid biosynthesis; L-histidine biosynthesis; L-histidine from 5-phospho-alpha-D-ribose 1-diphosphate: step 9/9. Functionally, catalyzes the sequential NAD-dependent oxidations of L-histidinol to L-histidinaldehyde and then to L-histidine. The chain is Histidinol dehydrogenase from Brucella melitensis biotype 1 (strain ATCC 23456 / CCUG 17765 / NCTC 10094 / 16M).